The chain runs to 99 residues: Small ribosomal subunit protein bS20 (99 aa).

Belongs to the bacterial ribosomal protein bS20 family.

In terms of biological role, binds directly to 16S ribosomal RNA. The protein is Small ribosomal subunit protein bS20 of Caldicellulosiruptor bescii (strain ATCC BAA-1888 / DSM 6725 / KCTC 15123 / Z-1320) (Anaerocellum thermophilum).